The primary structure comprises 86 residues: Large ribosomal subunit protein bL31 (86 aa).

The interval 65–86 is disordered; that stretch reads YGMGSANSATSKEQKEEKDSNK. Residues 76-86 show a composition bias toward basic and acidic residues; it reads KEQKEEKDSNK.

Belongs to the bacterial ribosomal protein bL31 family. Type A subfamily. Part of the 50S ribosomal subunit.

Its function is as follows. Binds the 23S rRNA. The protein is Large ribosomal subunit protein bL31 of Prochlorococcus marinus (strain MIT 9312).